Reading from the N-terminus, the 334-residue chain is Fructose-1,6-bisphosphatase class 1 (334 aa).

Mg(2+)-binding residues include E92, D114, L116, and D117. Substrate contacts are provided by residues 117–120 (DGSS) and N209. Position 281 (E281) interacts with Mg(2+).

The protein belongs to the FBPase class 1 family. Homotetramer. Mg(2+) is required as a cofactor.

It is found in the cytoplasm. It catalyses the reaction beta-D-fructose 1,6-bisphosphate + H2O = beta-D-fructose 6-phosphate + phosphate. The protein operates within carbohydrate biosynthesis; gluconeogenesis. The protein is Fructose-1,6-bisphosphatase class 1 of Nitrosomonas europaea (strain ATCC 19718 / CIP 103999 / KCTC 2705 / NBRC 14298).